A 244-amino-acid chain; its full sequence is Tyrosine recombinase XerD-like (244 aa).

Residues 1–73 (MRDRISAFLE…ACNQFLYFLY (73 aa)) form the Core-binding (CB) domain. The region spanning 90–244 (AEKKTEKPEI…KTVLTLEKYR (155 aa)) is the Tyr recombinase domain. Active-site residues include Lys150 and Arg211. Tyr243 functions as the O-(3'-phospho-DNA)-tyrosine intermediate in the catalytic mechanism.

Belongs to the 'phage' integrase family. XerD-like subfamily.

The protein localises to the cytoplasm. Its function is as follows. Putative tyrosine recombinase. Not involved in the cutting and rejoining of the recombining DNA molecules on dif(SL) site. This chain is Tyrosine recombinase XerD-like, found in Streptococcus pneumoniae serotype 2 (strain D39 / NCTC 7466).